A 218-amino-acid polypeptide reads, in one-letter code: Glutathione S-transferase U24 (218 aa).

Residues 3 to 82 (DEVILLDFWA…YIDETWPDNN (80 aa)) enclose the GST N-terminal domain. Glutathione contacts are provided by residues 13–14 (SM), 39–40 (NK), 53–54 (KI), and 66–67 (ES). A GST C-terminal domain is found at 88 to 215 (DPYKRAHAKF…TFISERRKKL (128 aa)). Residue Thr-148 is modified to Phosphothreonine.

It belongs to the GST superfamily. Tau family.

It localises to the cytoplasm. The protein localises to the cytosol. It carries out the reaction RX + glutathione = an S-substituted glutathione + a halide anion + H(+). In terms of biological role, may be involved in the conjugation of reduced glutathione to a wide number of exogenous and endogenous hydrophobic electrophiles and have a detoxification role against certain herbicides. The protein is Glutathione S-transferase U24 (GSTU24) of Arabidopsis thaliana (Mouse-ear cress).